The sequence spans 297 residues: N-acetylneuraminate lyase (297 aa).

Aceneuramate-binding residues include serine 47 and threonine 48. The Proton donor role is filled by tyrosine 137. Lysine 165 functions as the Schiff-base intermediate with substrate in the catalytic mechanism. Residues threonine 167, glycine 189, aspartate 191, glutamate 192, and serine 208 each contribute to the aceneuramate site.

Belongs to the DapA family. NanA subfamily. As to quaternary structure, homotetramer.

The protein localises to the cytoplasm. It carries out the reaction aceneuramate = aldehydo-N-acetyl-D-mannosamine + pyruvate. The protein operates within amino-sugar metabolism; N-acetylneuraminate degradation; D-fructose 6-phosphate from N-acetylneuraminate: step 1/5. In terms of biological role, catalyzes the reversible aldol cleavage of N-acetylneuraminic acid (sialic acid; Neu5Ac) to form pyruvate and N-acetylmannosamine (ManNAc) via a Schiff base intermediate. This chain is N-acetylneuraminate lyase, found in Escherichia coli (strain SMS-3-5 / SECEC).